We begin with the raw amino-acid sequence, 332 residues long: Adenosine receptor A2b (332 aa).

Over 1–8 the chain is Extracellular; that stretch reads MQLETQDA. The helical transmembrane segment at 9 to 33 threads the bilayer; that stretch reads LYVALELVIAALAVAGNVLVCAAVG. Residues 34–43 lie on the Cytoplasmic side of the membrane; that stretch reads ASSALQTPTN. Residues 44-67 traverse the membrane as a helical segment; it reads YFLVSLATADVAVGLFAIPFAITI. Residues 68–78 lie on the Extracellular side of the membrane; the sequence is SLGFCTDFHGC. A disulfide bridge links cysteine 78 with cysteine 171. A helical membrane pass occupies residues 79-101; that stretch reads LFLACFVLVLTQSSIFSLLAVAV. Residues 102-121 lie on the Cytoplasmic side of the membrane; it reads DRYLAIRVPLRYKGLVTGTR. The helical transmembrane segment at 122–144 threads the bilayer; that stretch reads ARGIIAVLWVLAFGIGLTPFLGW. Topologically, residues 145–178 are extracellular; the sequence is NSKDSATSNCTELGDGIANKSCCPVTCLFENVVP. Asparagine 153 and asparagine 163 each carry an N-linked (GlcNAc...) asparagine glycan. Residue glutamate 174 coordinates adenosine. The helical transmembrane segment at 179 to 203 threads the bilayer; that stretch reads MSYMVYFNFFGCVLPPLLIMLVIYI. Over 204–235 the chain is Cytoplasmic; sequence KIFMVACKQLQRMELMDHSRTTLQREIHAAKS. The chain crosses the membrane as a helical span at residues 236-259; that stretch reads LAMIVGIFALCWLPVHAINCITLF. Asparagine 254 contacts adenosine. At 260–267 the chain is on the extracellular side; the sequence is HPALAKDK. A helical membrane pass occupies residues 268–291; the sequence is PKWVMNVAILLSHANSVVNPIVYA. 2 residues coordinate adenosine: serine 279 and histidine 280. Residues 292-332 lie on the Cytoplasmic side of the membrane; that stretch reads YRNRDFRYSFHKIISRYVLCQAETKGGSGQAGAQSTLSLGL. The S-palmitoyl cysteine moiety is linked to residue cysteine 311.

Belongs to the G-protein coupled receptor 1 family.

It is found in the cell membrane. In terms of biological role, receptor for adenosine. The activity of this receptor is mediated by G proteins which activate adenylyl cyclase. The sequence is that of Adenosine receptor A2b (Adora2b) from Mus musculus (Mouse).